Consider the following 492-residue polypeptide: E3 ubiquitin-protein ligase TRIM35 (492 aa).

Met-1 is modified (N-acetylmethionine). Ser-4 and Ser-8 each carry phosphoserine. An RING-type zinc finger spans residues 21–61; sequence CAVCYDPFRDAVTLRCGHNFCRGCVSRCWEVQVSPTCPVCK. A B box-type zinc finger spans residues 96–137; that stretch reads RFSRVCRLHRGQLSLFCLEDKELLCCSCQADPRHQGHRVQPV. Zn(2+) contacts are provided by Cys-101, His-104, Cys-123, and His-129. A coiled-coil region spans residues 210–249; it reads AEETRQKQLLADEKMKQLTEETEVLAHEIERLQMEMKEDD. The B30.2/SPRY domain occupies 283-486; sequence YLGSLQYRVW…LRICPLHISV (204 aa).

Interacts with PKM isoform M2, but not isoform M1; this interaction may compete with that between PKM and FGFR1, and hence reduces FGFR1-dependent tyrosine phosphorylation of PKM. Interacts with IRF7; this interaction promotes IRF7 proteasomal degradation. Interacts with TRAF3; this interaction promotes TRAF3 activation.

It localises to the cytoplasm. Its subcellular location is the nucleus. The enzyme catalyses S-ubiquitinyl-[E2 ubiquitin-conjugating enzyme]-L-cysteine + [acceptor protein]-L-lysine = [E2 ubiquitin-conjugating enzyme]-L-cysteine + N(6)-ubiquitinyl-[acceptor protein]-L-lysine.. The protein operates within protein modification; protein ubiquitination. Its function is as follows. E3 ubiquitin-protein ligase that participates in multiple biological processes including cell death, glucose metabolism, and in particular, the innate immune response. Mediates 'Lys-63'-linked polyubiquitination of TRAF3 thereby promoting type I interferon production via RIG-I signaling pathway. Can also catalyze 'Lys-48'-linked polyubiquitination and proteasomal degradation of viral proteins such as influenza virus PB2. Acts as a negative feedback regulator of TLR7- and TLR9-triggered signaling. Mechanistically, promotes the 'Lys-48'-linked ubiquitination of IRF7 and induces its degradation via a proteasome-dependent pathway. Reduces FGFR1-dependent tyrosine phosphorylation of PKM, inhibiting PKM-dependent lactate production, glucose metabolism, and cell growth. This is E3 ubiquitin-protein ligase TRIM35 (TRIM35) from Pongo abelii (Sumatran orangutan).